A 341-amino-acid polypeptide reads, in one-letter code: MSLEATDSKAMVLLMGVRRCGKSSICKVVFHNMQPLDTLYLESTSNPSLEHFSTLIDLAVMELPGQLNYFEPSYDSERLFKSVGALVYVIDSQDEYINAITNLAMIIEYAYKVNPSINIEVLIHKVDGLSEDFKVDAQRDIMQRTGEELLELGLDGVQVSFYLTSIFDHSIYEAFSRIVQKLIPELSFLENMLDNLIQHSKIEKAFLFDVNSKIYVSTDSNPVDIQMYEVCSEFIDVTIDLFDLYKAPVLRNSQKSSDKDNVINPRNELQNVSQLANGVIIYLRQMIRGLALVAIIRPNGTDMESCLTVADYNIDIFKKGLEDIWANARASQAKNSIEDDV.

Residues serine 23, serine 24, serine 43, histidine 124, and aspartate 127 each contribute to the GTP site.

The protein belongs to the GTR/RAG GTP-binding protein family. In terms of assembly, heterodimer; with GTR1. Component of the GSE complex composed of GTR1, GTR2, SLM4, MEH1 and LTV1. Component of the EGO complex, at least composed of GTR2, SLM4 and MEH1. Interacts with GTR1; the interaction is direct.

The protein localises to the vacuole membrane. It carries out the reaction GTP + H2O = GDP + phosphate + H(+). Functionally, GTPase involved in activation of the TORC1 signaling pathway, which promotes growth and represses autophagy in nutrient-rich conditions. Also required for TORC1 inactivation during nitrogen starvation. Required for intracellular sorting of GAP1 out of the endosome. Involved in the regulation of microautophagy. In Saccharomyces cerevisiae (strain ATCC 204508 / S288c) (Baker's yeast), this protein is GTP-binding protein GTR2.